The sequence spans 1528 residues: MALRSFCSADGSDPLWDWNVTWHTSNPDFTKCFQNTVLTWVPCFYLWSCFPLYFFYLSRHDRGYIQMTHLNKTKTALGFFLWIICWADLFYSFWERSQGVLRAPVLLVSPTLLGITMLLATFLIQLERRKGVQSSGIMLTFWLVALLCALAILRSKIISALKKDAHVDVFRDSTFYLYFTLVLVQLVLSCFSDCSPLFSETVHDRNPCPESSASFLSRITFWWITGMMVHGYRQPLESSDLWSLNKEDTSEEVVPVLVNNWKKECDKSRKQPVRIVYAPPKDPSKPKGSSQLDVNEEVEALIVKSPHKDREPSLFKVLYKTFGPYFLMSFLYKALHDLMMFAGPKILELIINFVNDREAPDWQGYFYTALLFVSACLQTLALHQYFHICFVSGMRIKTAVVGAVYRKALLITNAARKSSTVGEIVNLMSVDAQRFMDLATYINMIWSAPLQVILALYFLWLSLGPSVLAGVAVMILMVPLNAVMAMKTKTYQVAHMKSKDNRIKLMNEILNGIKVLKLYAWELAFQDKVMSIRQEELKVLKKSAYLAAVGTFTWVCTPFLVALSTFAVFVTVDERNILDAKKAFVSLALFNILRFPLNILPMVISSIVQASVSLKRLRIFLSHEELEPDSIERRSIKSGEGNSITVKNATFTWARGEPPTLNGITFSIPEGALVAVVGQVGCGKSSLLSALLAEMDKVEGHVTLKGSVAYVPQQAWIQNDSLRENILFGHPLQENYYKAVMEACALLPDLEILPSGDRTEIGEKGVNLSGGQKQRVSLARAVYSNSDIYLFDDPLSAVDAHVGKHIFEKVVGPMGLLKNKTRILVTHGISYLPQVDVIIVMSGGKISEMGSYQELLDRDGAFAEFLRTYANAEQDLASEDDSVSGSGKESKPVENGMLVTDTVGKHLQRHLSNSSSHSGDTSQQHSSIAELQKAGAKEETWKLMEADKAQTGQVQLSVYWNYMKAIGLFITFLSIFLFLCNHVSALASNYWLSLWTDDPPVVNGTQANRNFRLSVYGALGILQGAAIFGYSMAVSIGGIFASRRLHLDLLYNVLRSPMSFFERTPSGNLVNRFSKELDTVDSMIPQVIKMFMGSLFSVIGAVIIILLATPIAAVIIPPLGLVYFFVQRFYVASSRQLKRLESVSRSPVYSHFNETLLGVSVIRAFEEQERFIHQSDLKVDENQKAYYPSIVANRWLAVRLECVGNCIVLFAALFAVISRHSLSAGLVGLSVSYSLQITAYLNWLVRMSSEMETNIVAVERLKEYSETEKEAPWQIQETAPPSTWPHSGRVEFRDYCLRYREDLDLVLKHINVTIEGGEKVGIVGRTGAGKSSLTLGLFRINESAEGEIIIDGVNIAKIGLHNLRFKITIIPQDPVLFSGSLRMNLDPFSQYSDEEVWMALELAHLKGFVSALPDKLNHECAEGGENLSVGQRQLVCLARALLRKTKILVLDEATAAVDLETDNLIQSTIRTQFEDCTVLTIAHRLNTIMDYTRVIVLDKGEVRECGAPSELLQQRGIFYSMAKDAGLV.

Residues 1–33 are Extracellular-facing; the sequence is MALRSFCSADGSDPLWDWNVTWHTSNPDFTKCF. The N-linked (GlcNAc...) asparagine glycan is linked to asparagine 19. A helical transmembrane segment spans residues 34–54; sequence QNTVLTWVPCFYLWSCFPLYF. Over 55 to 74 the chain is Cytoplasmic; sequence FYLSRHDRGYIQMTHLNKTK. A helical membrane pass occupies residues 75–95; sequence TALGFFLWIICWADLFYSFWE. Over 96-100 the chain is Extracellular; sequence RSQGV. The chain crosses the membrane as a helical span at residues 101–121; it reads LRAPVLLVSPTLLGITMLLAT. The Cytoplasmic segment spans residues 122-133; sequence FLIQLERRKGVQ. The chain crosses the membrane as a helical span at residues 134 to 154; the sequence is SSGIMLTFWLVALLCALAILR. At 155–172 the chain is on the extracellular side; sequence SKIISALKKDAHVDVFRD. Residues 173–193 traverse the membrane as a helical segment; sequence STFYLYFTLVLVQLVLSCFSD. The Cytoplasmic segment spans residues 194 to 317; it reads CSPLFSETVH…KDREPSLFKV (124 aa). Tyrosine 277 carries the post-translational modification Phosphotyrosine. Residue serine 290 is modified to Phosphoserine. Residues 318–338 traverse the membrane as a helical segment; it reads LYKTFGPYFLMSFLYKALHDL. An ABC transmembrane type-1 1 domain is found at 326–609; sequence FLMSFLYKAL…LPMVISSIVQ (284 aa). Residues 339–364 are Extracellular-facing; sequence MMFAGPKILELIINFVNDREAPDWQG. A helical membrane pass occupies residues 365-385; that stretch reads YFYTALLFVSACLQTLALHQY. At 386-441 the chain is on the cytoplasmic side; sequence FHICFVSGMRIKTAVVGAVYRKALLITNAARKSSTVGEIVNLMSVDAQRFMDLATY. The helical transmembrane segment at 442–462 threads the bilayer; that stretch reads INMIWSAPLQVILALYFLWLS. Over 463–465 the chain is Extracellular; it reads LGP. The helical transmembrane segment at 466–486 threads the bilayer; sequence SVLAGVAVMILMVPLNAVMAM. Topologically, residues 487-548 are cytoplasmic; the sequence is KTKTYQVAHM…VLKKSAYLAA (62 aa). Lysine 504 carries the N6-succinyllysine modification. The chain crosses the membrane as a helical span at residues 549-569; the sequence is VGTFTWVCTPFLVALSTFAVF. At 570 to 591 the chain is on the extracellular side; sequence VTVDERNILDAKKAFVSLALFN. Residues 592 to 612 traverse the membrane as a helical segment; the sequence is ILRFPLNILPMVISSIVQASV. Topologically, residues 613–963 are cytoplasmic; it reads SLKRLRIFLS…VQLSVYWNYM (351 aa). In terms of domain architecture, ABC transporter 1 spans 644–868; that stretch reads ITVKNATFTW…DGAFAEFLRT (225 aa). An ATP-binding site is contributed by 678-685; the sequence is GQVGCGKS. 2 disordered regions span residues 876–895 and 909–929; these read LASE…PVEN and RHLS…SSIA. A phosphoserine mark is found at serine 878, serine 882, serine 912, and serine 927. The span at 910–929 shows a compositional bias: polar residues; that stretch reads HLSNSSSHSGDTSQQHSSIA. The helical transmembrane segment at 964-984 threads the bilayer; the sequence is KAIGLFITFLSIFLFLCNHVS. One can recognise an ABC transmembrane type-1 2 domain in the interval 971-1253; the sequence is TFLSIFLFLC…LVRMSSEMET (283 aa). The Extracellular portion of the chain corresponds to 985–1022; that stretch reads ALASNYWLSLWTDDPPVVNGTQANRNFRLSVYGALGIL. N-linked (GlcNAc...) asparagine glycosylation occurs at asparagine 1003. The chain crosses the membrane as a helical span at residues 1023–1043; it reads QGAAIFGYSMAVSIGGIFASR. Residues 1044–1086 are Cytoplasmic-facing; that stretch reads RLHLDLLYNVLRSPMSFFERTPSGNLVNRFSKELDTVDSMIPQ. Residues 1087–1107 traverse the membrane as a helical segment; sequence VIKMFMGSLFSVIGAVIIILL. Position 1108 (alanine 1108) is a topological domain, extracellular. Residues 1109-1129 form a helical membrane-spanning segment; it reads TPIAAVIIPPLGLVYFFVQRF. Residues 1130–1200 are Cytoplasmic-facing; the sequence is YVASSRQLKR…VANRWLAVRL (71 aa). A helical membrane pass occupies residues 1201-1221; the sequence is ECVGNCIVLFAALFAVISRHS. The Extracellular portion of the chain corresponds to 1222 to 1223; it reads LS. A helical membrane pass occupies residues 1224–1244; the sequence is AGLVGLSVSYSLQITAYLNWL. Residues 1245–1528 are Cytoplasmic-facing; it reads VRMSSEMETN…YSMAKDAGLV (284 aa). An ABC transporter 2 domain is found at 1290–1524; that stretch reads VEFRDYCLRY…RGIFYSMAKD (235 aa). ATP is bound at residue 1324–1331; the sequence is GRTGAGKS.

The protein belongs to the ABC transporter superfamily. ABCC family. Conjugate transporter (TC 3.A.1.208) subfamily.

The protein resides in the cell membrane. The protein localises to the basolateral cell membrane. The enzyme catalyses ATP + H2O + xenobioticSide 1 = ADP + phosphate + xenobioticSide 2.. It carries out the reaction an S-substituted glutathione(in) + ATP + H2O = an S-substituted glutathione(out) + ADP + phosphate + H(+). The catalysed reaction is leukotriene C4(in) + ATP + H2O = leukotriene C4(out) + ADP + phosphate + H(+). It catalyses the reaction sphing-4-enine 1-phosphate(in) + ATP + H2O = sphing-4-enine 1-phosphate(out) + ADP + phosphate + H(+). The enzyme catalyses 17beta-estradiol 17-O-(beta-D-glucuronate)(in) + ATP + H2O = 17beta-estradiol 17-O-(beta-D-glucuronate)(out) + ADP + phosphate + H(+). It carries out the reaction vincristine(in) + ATP + H2O = vincristine(out) + ADP + phosphate + H(+). The catalysed reaction is daunorubicin(in) + ATP + H2O = daunorubicin(out) + ADP + phosphate + H(+). It catalyses the reaction 2',3'-cGAMP(in) + ATP + H2O = 2',3'-cGAMP(out) + ADP + phosphate + H(+). The enzyme catalyses S-[(2E,6E,10E)-geranylgeranyl]-L-glutathione(in) + ATP + H2O = S-[(2E,6E,10E)-geranylgeranyl]-L-glutathione(out) + ADP + phosphate + H(+). It carries out the reaction prostaglandin A2-S-(R)-glutathione(in) + ATP + H2O = prostaglandin A2-S-(R)-glutathione(out) + ADP + phosphate + H(+). The catalysed reaction is prostaglandin A2-S-(S)-glutathione(in) + ATP + H2O = prostaglandin A2-S-(S)-glutathione(out) + ADP + phosphate + H(+). Its activity is regulated as follows. MK 571 inhibits sphingosine 1-phosphate and leukotriene C4 export. Its function is as follows. Mediates export of organic anions and drugs from the cytoplasm. Mediates ATP-dependent transport of glutathione and glutathione conjugates, leukotriene C4, estradiol-17-beta-o-glucuronide, methotrexate, antiviral drugs and other xenobiotics. Confers resistance to anticancer drugs by decreasing accumulation of drugs in cells, and by mediating ATP- and GSH-dependent drug export. Hydrolyzes ATP with low efficiency. Catalyzes the export of sphingosine 1-phosphate from mast cells independently of their degranulation. Participates in inflammatory response by allowing export of leukotriene C4 from leukotriene C4-synthesizing cells. Mediates ATP-dependent, GSH-independent cyclic GMP-AMP (cGAMP) export. Thus, by limiting intracellular cGAMP concentrations negatively regulates the cGAS-STING pathway. Exports S-geranylgeranyl-glutathione (GGG) in lymphoid cells and stromal compartments of lymphoid organs. ABCC1 (via extracellular transport) with GGT5 (via GGG catabolism) establish GGG gradients within lymphoid tissues to position P2RY8-positive lymphocytes at germinal centers in lymphoid follicles and restrict their chemotactic transmigration from blood vessels to the bone marrow parenchyma. Mediates basolateral export of GSH-conjugated R- and S-prostaglandin A2 diastereomers in polarized epithelial cells. In Mus musculus (Mouse), this protein is Multidrug resistance-associated protein 1.